A 419-amino-acid chain; its full sequence is Gamma-glutamyl phosphate reductase (419 aa).

It belongs to the gamma-glutamyl phosphate reductase family.

It is found in the cytoplasm. It carries out the reaction L-glutamate 5-semialdehyde + phosphate + NADP(+) = L-glutamyl 5-phosphate + NADPH + H(+). It functions in the pathway amino-acid biosynthesis; L-proline biosynthesis; L-glutamate 5-semialdehyde from L-glutamate: step 2/2. Its function is as follows. Catalyzes the NADPH-dependent reduction of L-glutamate 5-phosphate into L-glutamate 5-semialdehyde and phosphate. The product spontaneously undergoes cyclization to form 1-pyrroline-5-carboxylate. The protein is Gamma-glutamyl phosphate reductase of Maridesulfovibrio salexigens (strain ATCC 14822 / DSM 2638 / NCIMB 8403 / VKM B-1763) (Desulfovibrio salexigens).